The primary structure comprises 210 residues: Probable nicotinate-nucleotide adenylyltransferase (210 aa).

This sequence belongs to the NadD family.

It catalyses the reaction nicotinate beta-D-ribonucleotide + ATP + H(+) = deamido-NAD(+) + diphosphate. It functions in the pathway cofactor biosynthesis; NAD(+) biosynthesis; deamido-NAD(+) from nicotinate D-ribonucleotide: step 1/1. Its function is as follows. Catalyzes the reversible adenylation of nicotinate mononucleotide (NaMN) to nicotinic acid adenine dinucleotide (NaAD). This is Probable nicotinate-nucleotide adenylyltransferase from Streptococcus pyogenes serotype M1.